A 229-amino-acid polypeptide reads, in one-letter code: MANKWRCSIALAVLSLTGCAYIPQKPLVEGATTAAPSVATAPVPNGAIFQVVQPVYYGYQPLFEDRRPRNIGDTLTITLQENVSASKNSSANASRNGKNTFSAALTPRFLKGLIGGDKTDLDMEAENTFGGKGGANANNTFKGTITVTVDRLLANGNLHVVGEKQIAINQGTEFIRFSGVVNPRTINANNTVSSNQVADARIEYVGNGYINEAQNMGWLQRFFLNVAPF.

An N-terminal signal peptide occupies residues 1–18 (MANKWRCSIALAVLSLTG). Residue Cys-19 is the site of N-palmitoyl cysteine attachment. The S-diacylglycerol cysteine moiety is linked to residue Cys-19.

Belongs to the FlgH family. In terms of assembly, the basal body constitutes a major portion of the flagellar organelle and consists of four rings (L,P,S, and M) mounted on a central rod.

Its subcellular location is the cell outer membrane. It is found in the bacterial flagellum basal body. Functionally, assembles around the rod to form the L-ring and probably protects the motor/basal body from shearing forces during rotation. The sequence is that of Flagellar L-ring protein (flgH) from Photorhabdus laumondii subsp. laumondii (strain DSM 15139 / CIP 105565 / TT01) (Photorhabdus luminescens subsp. laumondii).